The chain runs to 608 residues: X-ray repair cross-complementing protein 6 (608 aa).

The segment covering Met-1 to Glu-11 has biased composition (basic and acidic residues). The interval Met-1–Lys-29 is disordered. Ser-2 is modified (N-acetylserine). A Phosphoserine modification is found at Ser-2. Ser-6 carries the phosphoserine; by PRKDC modification. The span at Gly-12–Pro-22 shows a compositional bias: acidic residues. The Schiff-base intermediate with DNA; for 5'-deoxyribose-5-phosphate lyase activity role is filled by Lys-29. Lys-29 is modified (N6-acetyllysine). Ser-49 carries the post-translational modification Phosphoserine; by PRKDC. The 208-residue stretch at Phe-259 to Lys-466 folds into the Ku domain. The interval Val-275–Asp-339 is DNA-binding. Lys-315 participates in a covalent cross-link: Glycyl lysine isopeptide (Lys-Gly) (interchain with G-Cter in SUMO2). 3 positions are modified to N6-acetyllysine: Lys-329, Lys-336, and Lys-459. Residues Ser-371–Val-480 form an interaction with XRCC5 region. Phosphoserine occurs at positions 475, 518, and 548. The segment at Pro-534–Leu-557 is disordered. Positions Lys-537–Leu-557 are enriched in basic and acidic residues. The interaction with DEAF1 stretch occupies residues Ser-548–Lys-607. Lys-554 is covalently cross-linked (Glycyl lysine isopeptide (Lys-Gly) (interchain with G-Cter in SUMO2)). Ser-558 carries the phosphoserine modification. At Lys-568 the chain carries N6,N6,N6-trimethyllysine. Residues Leu-571–Leu-605 form the SAP domain. The segment at Val-576–Asp-581 is interaction with BAX.

Belongs to the ku70 family. In terms of assembly, heterodimer composed of XRCC5/Ku80 and XRCC6/Ku70. Component of the core long-range non-homologous end joining (NHEJ) complex (also named DNA-PK complex) composed of PRKDC, LIG4, XRCC4, XRCC6/Ku70, XRCC5/Ku86 and NHEJ1/XLF. Additional component of the NHEJ complex includes PAXX. Following autophosphorylation, PRKDC dissociates from DNA, leading to formation of the short-range NHEJ complex, composed of LIG4, XRCC4, XRCC6/Ku70, XRCC5/Ku86 and NHEJ1/XLF. The XRCC5-XRCC6 dimer also associates with NAA15, and this complex binds to the osteocalcin promoter and activates osteocalcin expression. In addition, XRCC6 interacts with the osteoblast-specific transcription factors MSX2, RUNX2 and DLX5. Interacts with ELF3. Interacts with ATP23. The XRCC5-XRRC6 dimer associates in a DNA-dependent manner with APEX1. Binds to CDK9. Identified in a complex with DEAF1 and XRCC5. Interacts with DEAF1 (via the SAND domain); the interaction is direct and may be inhibited by DNA-binding. Interacts with CLU. Interacts with NR4A3; the DNA-dependent protein kinase complex DNA-PK phosphorylates and activates NR4A3 and prevents NR4A3 ubiquitinylation and degradation. Interacts with CYREN (via KBM motif). Interacts (via N-terminus) with HSF1 (via N-terminus); this interaction is direct and prevents XRCC5/XRCC6 heterodimeric binding and non-homologous end joining (NHEJ) repair activities induced by ionizing radiation (IR). Part of the HDP-RNP complex composed of at least HEXIM1, PRKDC, XRCC5, XRCC6, paraspeckle proteins (SFPQ, NONO, PSPC1, RBM14, and MATR3) and NEAT1 RNA. Interacts with HMBOX1. Interacts with ATF7. Interacts with APLF (via KBM motif). Interacts with WRN (via KBM motif). The XRCC5-XRCC6 dimer associates with ALKBH2. Interacts with TPRN; TPRN interacts with a number of DNA damage response proteins, is recruited to sites of DNA damage and may play a role in DNA damage repair. When not acetylated, interacts with BAX. Interacts with ERCC6L2. In terms of processing, phosphorylation by PRKDC may enhance helicase activity. Phosphorylation of Ser-49 does not affect DNA repair. Post-translationally, ADP-ribosylated by PARP3. Methylation by SETD4 leads to accumulation in the cytoplasm and is a prerequisite for acetylation, possibly due to the change of subcellular from the nucleus to the cytosol initiated by methylation, acetylation occurring in the cytosol. In terms of processing, acetylation can be catalyzed in vitro by CREBBP/CBP and KAT2B/PCAF.

The protein localises to the nucleus. The protein resides in the chromosome. It localises to the cytoplasm. In terms of biological role, single-stranded DNA-dependent ATP-dependent helicase that plays a key role in DNA non-homologous end joining (NHEJ) by recruiting DNA-PK to DNA. Required for double-strand break repair and V(D)J recombination. Also has a role in chromosome translocation. Has a role in chromosome translocation. The DNA helicase II complex binds preferentially to fork-like ends of double-stranded DNA in a cell cycle-dependent manner. It works in the 3'-5' direction. During NHEJ, the XRCC5-XRRC6 dimer performs the recognition step: it recognizes and binds to the broken ends of the DNA and protects them from further resection. Binding to DNA may be mediated by XRCC6. The XRCC5-XRRC6 dimer acts as a regulatory subunit of the DNA-dependent protein kinase complex DNA-PK by increasing the affinity of the catalytic subunit PRKDC to DNA by 100-fold. The XRCC5-XRRC6 dimer is probably involved in stabilizing broken DNA ends and bringing them together. The assembly of the DNA-PK complex to DNA ends is required for the NHEJ ligation step. Probably also acts as a 5'-deoxyribose-5-phosphate lyase (5'-dRP lyase), by catalyzing the beta-elimination of the 5' deoxyribose-5-phosphate at an abasic site near double-strand breaks. 5'-dRP lyase activity allows to 'clean' the termini of abasic sites, a class of nucleotide damage commonly associated with strand breaks, before such broken ends can be joined. The XRCC5-XRRC6 dimer together with APEX1 acts as a negative regulator of transcription. In association with NAA15, the XRCC5-XRRC6 dimer binds to the osteocalcin promoter and activates osteocalcin expression. Plays a role in the regulation of DNA virus-mediated innate immune response by assembling into the HDP-RNP complex, a complex that serves as a platform for IRF3 phosphorylation and subsequent innate immune response activation through the cGAS-STING pathway. Negatively regulates apoptosis by interacting with BAX and sequestering it from the mitochondria. Might have deubiquitination activity, acting on BAX. This is X-ray repair cross-complementing protein 6 (Xrcc6) from Mus musculus (Mouse).